Consider the following 353-residue polypeptide: Membrane lipoprotein TmpC (353 aa).

A signal peptide spans 1–20 (MREKWVRAFAGVFCAMLLIG). C21 carries N-palmitoyl cysteine lipidation. The S-diacylglycerol cysteine moiety is linked to residue C21. D47 lines the guanosine pocket. Residue D47 coordinates inosine. Adenosine-binding positions include 47–48 (DS) and F56. The guanosine site is built by N57, D128, F206, G232, D258, and K280. Positions 57 and 128 each coordinate inosine. Residues D128, F206, G232, D258, and K280 each coordinate adenosine. The inosine site is built by G232, D258, and K280.

Belongs to the BMP lipoprotein family. As to quaternary structure, monomer.

Its subcellular location is the cell membrane. Functionally, binds purine nucleosides and may play a role in purine nucleoside uptake. May be part of an ABC-type nucleoside uptake system. Has highest affinity for guanosine, followed by inosine and adenosine. Has very low affinity for cytidine and does not bind thymidine. This chain is Membrane lipoprotein TmpC (tmpC), found in Treponema pallidum (strain Nichols).